Consider the following 551-residue polypeptide: Cleavage and polyadenylation specificity factor subunit 6 (551 aa).

The necessary for interaction with NXF1 stretch occupies residues 1–213 (MADGVDHIDI…RGRFPGAVPG (213 aa)). Residues 81-161 (IALYIGNLTW…QNPVVTPCNK (81 aa)) form the RRM domain. The interval 81–161 (IALYIGNLTW…QNPVVTPCNK (81 aa)) is necessary for interaction with NUDT21/CPSF5. The tract at residues 81-161 (IALYIGNLTW…QNPVVTPCNK (81 aa)) is necessary for nuclear paraspeckles localization. T157 carries the phosphothreonine modification. The segment covering 169–180 (MQSRKTTQSGQM) has biased composition (polar residues). 2 disordered regions span residues 169–411 (MQSR…PLSE) and 477–551 (LHGI…YRHR). Positions 202–206 (RGRGR) match the GAR motif. Residues 207 to 219 (FPGAVPGGDRFPG) show a composition bias toward low complexity. Composition is skewed to pro residues over residues 220–265 (PAGP…PLAG), 285–366 (GQPP…PPPT), and 377–388 (GPPPTDPYGRPP). The tract at residues 358 to 551 (NPAFFPPPTN…RDREREYRHR (194 aa)) is (Microbial infection) Binds to HIV-1 capsid protein p24 (CA). The segment covering 389 to 404 (PYDRGDYGPPGREMDT) has biased composition (basic and acidic residues). Phosphothreonine occurs at positions 404 and 407. Residues 404-551 (TARTPLSEAE…RDREREYRHR (148 aa)) form a sufficient for nuclear speckle localization region. Residues 405 to 551 (ARTPLSEAEF…RDREREYRHR (147 aa)) are necessary for RNA-binding. The necessary for interaction with SRSF3, SRSF7 and TRA2B/SFRS10 stretch occupies residues 481 to 551 (ESKSYGSGSR…RDREREYRHR (71 aa)). The span at 489–503 (SRRERSRERDHSRSR) shows a compositional bias: basic and acidic residues. The arg/Ser-rich domain stretch occupies residues 490–551 (RRERSRERDH…RDREREYRHR (62 aa)). S494, S500, S511, S513, and S525 each carry phosphoserine. A compositionally biased stretch (basic residues) spans 504–514 (EKSRRHKSRSR). A sufficient for nuclear targeting region spans residues 510–551 (KSRSRDRHDDYYRERSRERERHRDRDRDRDRERDREREYRHR). Over residues 515-551 (DRHDDYYRERSRERERHRDRDRDRDRERDREREYRHR) the composition is skewed to basic and acidic residues.

This sequence belongs to the RRM CPSF6/7 family. As to quaternary structure, component of the cleavage factor Im (CFIm) complex which is a heterotetramer composed of two subunits of NUDT21/CPSF5 and two subunits of CPSF6 or CPSF7 or a heterodimer of CPSF6 and CPSF7. The cleavage factor Im (CFIm) complex associates with the CPSF and CSTF complexes to promote the assembly of the core mRNA 3'-processing machinery. Associates with the exon junction complex (EJC). Associates with the 80S ribosome particle. Interacts (via the RRM domain) with NUDT21/CPSF5; this interaction is direct and enhances binding to RNA. Interacts (via Arg/Ser-rich domain) with FIP1L1 (preferentially via unphosphorylated form and Arg/Glu/Asp-rich domain); this interaction mediates, at least in part, the interaction between the CFIm and CPSF complexes and may be inhibited by CPSF6 hyper-phosphorylation. Interacts (via N-terminus) with NXF1; this interaction is direct. Interacts with SRSF3. Interacts with SRSF7. Interacts with SNRNP70. Interacts with TRA2B/SFRS10. Interacts with UPF1. Interacts with UPF3B. Interacts with VIRMA. Interacts (via Arg/Ser-rich domain) with TNPO3; promoting nuclear import of CPSF6 independently of its phosphorylation status. Interacts with YTHDC1. In terms of assembly, (Microbial infection) Interacts (via C-terminus) with HIV-1 capsid protein p24 (CA). Post-translationally, phosphorylated. Phosphorylated in the Arg/Ser-rich domain by SRPK1, in vitro. Symmetrically dimethylated on arginine residues in the GAR motif by PRMT5 in a WDR77- and CLNS1A-dependent manner. Asymmetrically dimethylated on arginine residues in the GAR motif by PRMT1.

It is found in the nucleus. The protein localises to the nucleoplasm. Its subcellular location is the nucleus speckle. The protein resides in the cytoplasm. Functionally, component of the cleavage factor Im (CFIm) complex that functions as an activator of the pre-mRNA 3'-end cleavage and polyadenylation processing required for the maturation of pre-mRNA into functional mRNAs. CFIm contributes to the recruitment of multiprotein complexes on specific sequences on the pre-mRNA 3'-end, so called cleavage and polyadenylation signals (pA signals). Most pre-mRNAs contain multiple pA signals, resulting in alternative cleavage and polyadenylation (APA) producing mRNAs with variable 3'-end formation. The CFIm complex acts as a key regulator of cleavage and polyadenylation site choice during APA through its binding to 5'-UGUA-3' elements localized in the 3'-untranslated region (UTR) for a huge number of pre-mRNAs. CPSF6 enhances NUDT21/CPSF5 binding to 5'-UGUA-3' elements localized upstream of pA signals and promotes RNA looping, and hence activates directly the mRNA 3'-processing machinery. Plays a role in mRNA export. (Microbial infection) Binds HIV-1 capsid-nucleocapsid (HIV-1 CA-NC) complexes and might thereby promote the integration of the virus in the nucleus of dividing cells (in vitro). The protein is Cleavage and polyadenylation specificity factor subunit 6 of Homo sapiens (Human).